Reading from the N-terminus, the 491-residue chain is Protein nucleotidyltransferase YdiU (491 aa).

Residues G92, G94, R95, K115, D127, G128, R178, and R185 each contribute to the ATP site. The active-site Proton acceptor is the D254. Residues N255 and D264 each coordinate Mg(2+). Residue D264 coordinates ATP.

This sequence belongs to the SELO family. Mg(2+) is required as a cofactor. Requires Mn(2+) as cofactor.

The enzyme catalyses L-seryl-[protein] + ATP = 3-O-(5'-adenylyl)-L-seryl-[protein] + diphosphate. It carries out the reaction L-threonyl-[protein] + ATP = 3-O-(5'-adenylyl)-L-threonyl-[protein] + diphosphate. It catalyses the reaction L-tyrosyl-[protein] + ATP = O-(5'-adenylyl)-L-tyrosyl-[protein] + diphosphate. The catalysed reaction is L-histidyl-[protein] + UTP = N(tele)-(5'-uridylyl)-L-histidyl-[protein] + diphosphate. The enzyme catalyses L-seryl-[protein] + UTP = O-(5'-uridylyl)-L-seryl-[protein] + diphosphate. It carries out the reaction L-tyrosyl-[protein] + UTP = O-(5'-uridylyl)-L-tyrosyl-[protein] + diphosphate. Its function is as follows. Nucleotidyltransferase involved in the post-translational modification of proteins. It can catalyze the addition of adenosine monophosphate (AMP) or uridine monophosphate (UMP) to a protein, resulting in modifications known as AMPylation and UMPylation. In Pseudarthrobacter chlorophenolicus (strain ATCC 700700 / DSM 12829 / CIP 107037 / JCM 12360 / KCTC 9906 / NCIMB 13794 / A6) (Arthrobacter chlorophenolicus), this protein is Protein nucleotidyltransferase YdiU.